Reading from the N-terminus, the 190-residue chain is Peptidyl-tRNA hydrolase (190 aa).

Tyrosine 14 provides a ligand contact to tRNA. The active-site Proton acceptor is the histidine 19. Residues tyrosine 64, asparagine 66, and asparagine 112 each contribute to the tRNA site.

The protein belongs to the PTH family. In terms of assembly, monomer.

Its subcellular location is the cytoplasm. The catalysed reaction is an N-acyl-L-alpha-aminoacyl-tRNA + H2O = an N-acyl-L-amino acid + a tRNA + H(+). Functionally, hydrolyzes ribosome-free peptidyl-tRNAs (with 1 or more amino acids incorporated), which drop off the ribosome during protein synthesis, or as a result of ribosome stalling. Catalyzes the release of premature peptidyl moieties from peptidyl-tRNA molecules trapped in stalled 50S ribosomal subunits, and thus maintains levels of free tRNAs and 50S ribosomes. This Chlorobium chlorochromatii (strain CaD3) protein is Peptidyl-tRNA hydrolase.